Consider the following 153-residue polypeptide: FAD synthase (153 aa).

ATP contacts are provided by residues 9 to 10 (TF), 14 to 17 (HPGH), and D92.

This sequence belongs to the archaeal FAD synthase family. As to quaternary structure, homodimer. A divalent metal cation is required as a cofactor.

The enzyme catalyses FMN + ATP + H(+) = FAD + diphosphate. It functions in the pathway cofactor biosynthesis; FAD biosynthesis; FAD from FMN: step 1/1. Functionally, catalyzes the transfer of the AMP portion of ATP to flavin mononucleotide (FMN) to produce flavin adenine dinucleotide (FAD) coenzyme. This chain is FAD synthase, found in Halorubrum lacusprofundi (strain ATCC 49239 / DSM 5036 / JCM 8891 / ACAM 34).